A 311-amino-acid chain; its full sequence is tRNA dimethylallyltransferase (311 aa).

ATP is bound at residue 11 to 18 (GPTAVGKT). 13-18 (TAVGKT) lines the substrate pocket. The interval 36 to 39 (DSMQ) is interaction with substrate tRNA.

It belongs to the IPP transferase family. In terms of assembly, monomer. Requires Mg(2+) as cofactor.

It catalyses the reaction adenosine(37) in tRNA + dimethylallyl diphosphate = N(6)-dimethylallyladenosine(37) in tRNA + diphosphate. Catalyzes the transfer of a dimethylallyl group onto the adenine at position 37 in tRNAs that read codons beginning with uridine, leading to the formation of N6-(dimethylallyl)adenosine (i(6)A). The chain is tRNA dimethylallyltransferase from Clostridioides difficile (strain 630) (Peptoclostridium difficile).